Reading from the N-terminus, the 114-residue chain is Probable non-functional T cell receptor beta variable 6-7 (114 aa).

The N-terminal stretch at M1–A21 is a signal peptide. The Ig-like domain maps to G22–Y114. Cysteines 42 and 110 form a disulfide. A glycan (N-linked (GlcNAc...) asparagine) is linked at N84.

Alpha-beta TR is a heterodimer composed of an alpha and beta chain; disulfide-linked. The alpha-beta TR is associated with the transmembrane signaling CD3 coreceptor proteins to form the TR-CD3 (TcR or TCR). The assembly of alpha-beta TR heterodimers with CD3 occurs in the endoplasmic reticulum where a single alpha-beta TR heterodimer associates with one CD3D-CD3E heterodimer, one CD3G-CD3E heterodimer and one CD247 homodimer forming a stable octameric structure. CD3D-CD3E and CD3G-CD3E heterodimers preferentially associate with TR alpha and TR beta chains, respectively. The association of the CD247 homodimer is the last step of TcR assembly in the endoplasmic reticulum and is required for transport to the cell surface.

The protein resides in the cell membrane. In terms of biological role, probable non-functional open reading frame (ORF) of V region of the variable domain of T cell receptor (TR) beta chain. Non-functional ORF generally cannot participate in the synthesis of a productive T cell receptor (TR) chain due to altered V-(D)-J or switch recombination and/or splicing site (at mRNA level) and/or conserved amino acid change (protein level). Alpha-beta T cell receptors are antigen specific receptors which are essential to the immune response and are present on the cell surface of T lymphocytes. Recognize peptide-major histocompatibility (MH) (pMH) complexes that are displayed by antigen presenting cells (APC), a prerequisite for efficient T cell adaptive immunity against pathogens. Binding of alpha-beta TR to pMH complex initiates TR-CD3 clustering on the cell surface and intracellular activation of LCK that phosphorylates the ITAM motifs of CD3G, CD3D, CD3E and CD247 enabling the recruitment of ZAP70. In turn ZAP70 phosphorylates LAT, which recruits numerous signaling molecules to form the LAT signalosome. The LAT signalosome propagates signal branching to three major signaling pathways, the calcium, the mitogen-activated protein kinase (MAPK) kinase and the nuclear factor NF-kappa-B (NF-kB) pathways, leading to the mobilization of transcription factors that are critical for gene expression and essential for T cell growth and differentiation. The T cell repertoire is generated in the thymus, by V-(D)-J rearrangement. This repertoire is then shaped by intrathymic selection events to generate a peripheral T cell pool of self-MH restricted, non-autoaggressive T cells. Post-thymic interaction of alpha-beta TR with the pMH complexes shapes TR structural and functional avidity. The sequence is that of Probable non-functional T cell receptor beta variable 6-7 from Homo sapiens (Human).